The primary structure comprises 254 residues: Phosphoribosylaminoimidazole-succinocarboxamide synthase (254 aa).

The protein belongs to the SAICAR synthetase family.

It catalyses the reaction 5-amino-1-(5-phospho-D-ribosyl)imidazole-4-carboxylate + L-aspartate + ATP = (2S)-2-[5-amino-1-(5-phospho-beta-D-ribosyl)imidazole-4-carboxamido]succinate + ADP + phosphate + 2 H(+). The protein operates within purine metabolism; IMP biosynthesis via de novo pathway; 5-amino-1-(5-phospho-D-ribosyl)imidazole-4-carboxamide from 5-amino-1-(5-phospho-D-ribosyl)imidazole-4-carboxylate: step 1/2. This Brucella canis (strain ATCC 23365 / NCTC 10854 / RM-666) protein is Phosphoribosylaminoimidazole-succinocarboxamide synthase.